A 293-amino-acid chain; its full sequence is Acetyl-coenzyme A carboxylase carboxyl transferase subunit beta (293 aa).

One can recognise a CoA carboxyltransferase N-terminal domain in the interval 29–293 (LWSKCPECGL…GSKSLELTNA (265 aa)). Zn(2+)-binding residues include cysteine 33, cysteine 36, cysteine 52, and cysteine 55. The C4-type zinc finger occupies 33–55 (CPECGLVVYLKDLRLNASVCAGC).

This sequence belongs to the AccD/PCCB family. As to quaternary structure, acetyl-CoA carboxylase is a heterohexamer composed of biotin carboxyl carrier protein (AccB), biotin carboxylase (AccC) and two subunits each of ACCase subunit alpha (AccA) and ACCase subunit beta (AccD). Zn(2+) serves as cofactor.

It is found in the cytoplasm. The catalysed reaction is N(6)-carboxybiotinyl-L-lysyl-[protein] + acetyl-CoA = N(6)-biotinyl-L-lysyl-[protein] + malonyl-CoA. The protein operates within lipid metabolism; malonyl-CoA biosynthesis; malonyl-CoA from acetyl-CoA: step 1/1. Functionally, component of the acetyl coenzyme A carboxylase (ACC) complex. Biotin carboxylase (BC) catalyzes the carboxylation of biotin on its carrier protein (BCCP) and then the CO(2) group is transferred by the transcarboxylase to acetyl-CoA to form malonyl-CoA. The polypeptide is Acetyl-coenzyme A carboxylase carboxyl transferase subunit beta (Synechococcus sp. (strain CC9902)).